A 1576-amino-acid chain; its full sequence is DExH-box ATP-dependent RNA helicase DExH2 (1576 aa).

The region spanning 15 to 78 (EATGAWATKV…ERRLSLFKGD (64 aa)) is the R3H domain. The region spanning 227–396 (ISAVESNQVV…FGGCPVVRVP (170 aa)) is the Helicase ATP-binding domain. 240 to 247 (GETGCGKT) contributes to the ATP binding site. A DEIH box motif is present at residues 343-346 (DEIH). One can recognise a Helicase C-terminal domain in the interval 561–735 (LIVKLMKKIC…ELCLQVKMLD (175 aa)). Disordered regions lie at residues 1137–1165 (ATSP…MGSK), 1177–1223 (MEES…SLNN), and 1260–1576 (DMGN…PSDQ). A compositionally biased stretch (polar residues) spans 1281–1301 (PNSANSMDLGNMEENTPSDLA). Over residues 1305–1319 (KKKEPKSVSKLDLGS) the composition is skewed to basic and acidic residues. The PH1 motif lies at 1349–1360 (KQPEKKRSRSKK). The segment covering 1352–1363 (EKKRSRSKKRKS) has biased composition (basic residues). The span at 1381–1412 (ANENEQTEPKSANNLDLGNMKENTPSDLANEN) shows a compositional bias: polar residues. A PH2 motif is present at residues 1454 to 1465 (KQPKKKRSRSKK). Residues 1455–1467 (QPKKKRSRSKKCK) are compositionally biased toward basic residues. Basic and acidic residues predominate over residues 1490–1508 (EQKDPESVNRLDPGKEKES). The span at 1509 to 1524 (IPSNLVSGNEQPDSNT) shows a compositional bias: polar residues. Residues 1528–1537 (KKPKKKKRKL) show a composition bias toward basic residues. A Nuclear localization signal motif is present at residues 1530–1537 (PKKKKRKL). A compositionally biased stretch (polar residues) spans 1540–1562 (NFDSVNNMEEKMPSTNVLSQGNK).

Belongs to the DExH box helicase family. As to quaternary structure, homodimer.

The protein resides in the nucleus. It carries out the reaction ATP + H2O = ADP + phosphate + H(+). In terms of biological role, may function as an ATP-dependent RNA/DNA helicase. Binds DNA in vitro in a non-specific manner. This Arabidopsis thaliana (Mouse-ear cress) protein is DExH-box ATP-dependent RNA helicase DExH2.